We begin with the raw amino-acid sequence, 63 residues long: Cecropin-B (63 aa).

The N-terminal stretch at 1 to 22 is a signal peptide; sequence MNFAKILSFVFALVLALSMTSA. The propeptide at 23–26 is removed by a dipeptidylpeptidase; that stretch reads APEP. Lys47 is modified (5-hydroxylysine; partial). Ile61 is modified (isoleucine amide).

Belongs to the cecropin family. In terms of processing, lepidopteran-B differs from lepidopteran-A by its hydroxylated residue. As to expression, highest expression in fat body and hemocytes. Is also expressed in Malpighian tubules and to a much lesser extent in midgut. Not present in silk gland.

It is found in the secreted. Its function is as follows. Cecropins have lytic and antibacterial activity against several Gram-positive and Gram-negative bacteria. This is Cecropin-B (CECB1) from Bombyx mori (Silk moth).